The chain runs to 246 residues: Metallo-beta-lactamase IMP-1 (246 aa).

The first 18 residues, 1 to 18, serve as a signal peptide directing secretion; the sequence is MSKLSVFFIFLFCSIATA. The Zn(2+) site is built by H95, H97, D99, H157, and C176. 2 residues coordinate a beta-lactam: K179 and N185. Residue H215 coordinates Zn(2+).

It belongs to the metallo-beta-lactamase superfamily. Class-B beta-lactamase family. Monomer. Requires Zn(2+) as cofactor.

Its subcellular location is the periplasm. The catalysed reaction is a beta-lactam + H2O = a substituted beta-amino acid. With respect to regulation, inhibited by captopril stereoisomers, Hg(2+), Fe(2+), Cu(2+), chelating agents such as EDTA, dansyl derivatives, including dansyl-C4SH, bisthiazolidines, mercaptoacetic acid and by PMPC phosphonates. Inhibited by 3-(3-mercaptopropionylsulfanyl)-propionic acid pentafluorophenyl ester, via a covalent binding to Lys-179. Not susceptible to inactivation by the beta-lactamase-blocking agents clavulanic acid or cloxacillin. In terms of biological role, class B beta-lactamase which confers resistance to the beta-lactam antibiotics, including penicillins, cephalosporins and carbapenems. Acts via hydrolysis of the beta-lactam ring. Has penicillin-, cephalosporin- and carbapenem-hydrolyzing activities. Has endoribonuclease activity, cleaving substrate RNAs preferentially between U/C and A, in vitro. The polypeptide is Metallo-beta-lactamase IMP-1 (Serratia marcescens).